The following is a 413-amino-acid chain: Histidine--tRNA ligase (413 aa).

The protein belongs to the class-II aminoacyl-tRNA synthetase family. In terms of assembly, homodimer.

The protein localises to the cytoplasm. The enzyme catalyses tRNA(His) + L-histidine + ATP = L-histidyl-tRNA(His) + AMP + diphosphate + H(+). The chain is Histidine--tRNA ligase from Fusobacterium nucleatum subsp. nucleatum (strain ATCC 25586 / DSM 15643 / BCRC 10681 / CIP 101130 / JCM 8532 / KCTC 2640 / LMG 13131 / VPI 4355).